The sequence spans 1044 residues: Protein ITPRID1 (1044 aa).

The span at 1-14 shows a compositional bias: polar residues; that stretch reads MMAQKSQGSDNLQE. Disordered regions lie at residues 1 to 20, 230 to 251, 388 to 489, and 583 to 607; these read MMAQ…EKSK, EEKA…EHRR, MEEV…SSQE, and PEGA…HTQD. The span at 388-398 shows a compositional bias: acidic residues; that stretch reads MEEVQSFEEET. Polar residues-rich tracts occupy residues 460–469 and 480–489; these read HSLVSSQDCQ and RASMSFSSQE. The stretch at 896–937 forms a coiled coil; the sequence is SRDMSEEEREEAEQLQTLREALRQQVAELEFQLGDRAQQIRE.

The protein is Protein ITPRID1 of Homo sapiens (Human).